A 333-amino-acid chain; its full sequence is Probable pyridoxal reductase 2 (333 aa).

Tyrosine 52 acts as the Proton donor in catalysis.

This sequence belongs to the aldo/keto reductase family.

The protein resides in the cytoplasm. The catalysed reaction is pyridoxine + NADP(+) = pyridoxal + NADPH + H(+). Catalyzes the reduction of pyridoxal (PL) with NADPH and oxidation of pyridoxine (PN) with NADP(+). The polypeptide is Probable pyridoxal reductase 2 (Schizosaccharomyces pombe (strain 972 / ATCC 24843) (Fission yeast)).